Here is an 85-residue protein sequence, read N- to C-terminus: MRNSRKVLMGVVVSDKMQKTATVKVESKNRHPFYHKLVISHKKYHVHNEEGENAAKVGDKVLIMETRPLSATKRWRIAKIIERAK.

This sequence belongs to the universal ribosomal protein uS17 family. Part of the 30S ribosomal subunit.

One of the primary rRNA binding proteins, it binds specifically to the 5'-end of 16S ribosomal RNA. In Mycoplasmoides gallisepticum (strain R(low / passage 15 / clone 2)) (Mycoplasma gallisepticum), this protein is Small ribosomal subunit protein uS17.